Consider the following 217-residue polypeptide: Pyridoxine/pyridoxamine 5'-phosphate oxidase (217 aa).

Substrate-binding positions include 13-16 (RREY) and Lys-71. Residues 66 to 71 (RIVLLK), 81 to 82 (YT), Arg-87, Lys-88, and Gln-110 contribute to the FMN site. Substrate-binding residues include Tyr-128, Arg-132, and Ser-136. Residues 145 to 146 (QS) and Trp-190 contribute to the FMN site. 196-198 (RLH) provides a ligand contact to substrate. Position 200 (Arg-200) interacts with FMN.

Belongs to the pyridoxamine 5'-phosphate oxidase family. Homodimer. The cofactor is FMN.

It carries out the reaction pyridoxamine 5'-phosphate + O2 + H2O = pyridoxal 5'-phosphate + H2O2 + NH4(+). The catalysed reaction is pyridoxine 5'-phosphate + O2 = pyridoxal 5'-phosphate + H2O2. Its pathway is cofactor metabolism; pyridoxal 5'-phosphate salvage; pyridoxal 5'-phosphate from pyridoxamine 5'-phosphate: step 1/1. The protein operates within cofactor metabolism; pyridoxal 5'-phosphate salvage; pyridoxal 5'-phosphate from pyridoxine 5'-phosphate: step 1/1. Functionally, catalyzes the oxidation of either pyridoxine 5'-phosphate (PNP) or pyridoxamine 5'-phosphate (PMP) into pyridoxal 5'-phosphate (PLP). This Yersinia enterocolitica serotype O:8 / biotype 1B (strain NCTC 13174 / 8081) protein is Pyridoxine/pyridoxamine 5'-phosphate oxidase.